A 434-amino-acid polypeptide reads, in one-letter code: MTVKTETAAGASTLTYSKMRGMVALLIAFMKQRRMGLNEFIQKIATNSSYSCKPSEVQSILNISPPQESELLNENSSPPPSHSQQINLGPSSNPHAKPSDFQFLKIIGKGSFGKVLLARHKADEKFYAVKVLQKKAILKKKEEKHIMSERNVLLKNVKHPFLVGLHFSIQTTSRLYFILDYINGGELFYHLQRERCFLEPRARFYAAEIASALGYLHSLNIVYRDLKPENILLDSQGHIVLTDFGLCKENIEPNGITSTFCGTPEYLAPEVLHKQPYDRTVDWWCLGAVLYEMLYGLPPFYSRNTAEMYDNILNKPLQLKPNITNSARNLLEGLLQKDRTKRTGAKTDFMEIKNHIFFSPIDWDDLINKKITPPFNPNVSGPSDLQHFDPEFTDEPVPNSIGQSPDSILITASIKEAAEAFMGFSYAPPMDSYL.

The segment at 68 to 94 is disordered; sequence ESELLNENSSPPPSHSQQINLGPSSNP. The region spanning 101–358 is the Protein kinase domain; it reads FQFLKIIGKG…FMEIKNHIFF (258 aa). Residues 107–115 and K130 each bind ATP; that span reads IGKGSFGKV. Catalysis depends on D225, which acts as the Proton acceptor. Positions 359 to 434 constitute an AGC-kinase C-terminal domain; it reads SPIDWDDLIN…SYAPPMDSYL (76 aa).

The protein belongs to the protein kinase superfamily. AGC Ser/Thr protein kinase family.

Its subcellular location is the cytoplasm. It localises to the nucleus. It is found in the endoplasmic reticulum. The enzyme catalyses L-seryl-[protein] + ATP = O-phospho-L-seryl-[protein] + ADP + H(+). It catalyses the reaction L-threonyl-[protein] + ATP = O-phospho-L-threonyl-[protein] + ADP + H(+). Its function is as follows. Protein kinase that may play an important role in cellular stress response. Plays an important role in activating certain potassium, sodium, and chloride channels, suggesting an involvement in the regulation of processes such as cell survival, neuronal excitability and renal sodium excretion. This is Serine/threonine-protein kinase Sgk1-B (sgk1-b) from Xenopus laevis (African clawed frog).